The following is a 172-amino-acid chain: Crossover junction endodeoxyribonuclease RuvC (172 aa).

Residues aspartate 11, glutamate 71, and aspartate 143 contribute to the active site. Residues aspartate 11, glutamate 71, and aspartate 143 each coordinate Mg(2+).

This sequence belongs to the RuvC family. As to quaternary structure, homodimer which binds Holliday junction (HJ) DNA. The HJ becomes 2-fold symmetrical on binding to RuvC with unstacked arms; it has a different conformation from HJ DNA in complex with RuvA. In the full resolvosome a probable DNA-RuvA(4)-RuvB(12)-RuvC(2) complex forms which resolves the HJ. Requires Mg(2+) as cofactor.

The protein resides in the cytoplasm. The catalysed reaction is Endonucleolytic cleavage at a junction such as a reciprocal single-stranded crossover between two homologous DNA duplexes (Holliday junction).. In terms of biological role, the RuvA-RuvB-RuvC complex processes Holliday junction (HJ) DNA during genetic recombination and DNA repair. Endonuclease that resolves HJ intermediates. Cleaves cruciform DNA by making single-stranded nicks across the HJ at symmetrical positions within the homologous arms, yielding a 5'-phosphate and a 3'-hydroxyl group; requires a central core of homology in the junction. The consensus cleavage sequence is 5'-(A/T)TT(C/G)-3'. Cleavage occurs on the 3'-side of the TT dinucleotide at the point of strand exchange. HJ branch migration catalyzed by RuvA-RuvB allows RuvC to scan DNA until it finds its consensus sequence, where it cleaves and resolves the cruciform DNA. This is Crossover junction endodeoxyribonuclease RuvC from Brucella anthropi (strain ATCC 49188 / DSM 6882 / CCUG 24695 / JCM 21032 / LMG 3331 / NBRC 15819 / NCTC 12168 / Alc 37) (Ochrobactrum anthropi).